Reading from the N-terminus, the 160-residue chain is 17.9 kDa class II heat shock protein (160 aa).

In terms of domain architecture, sHSP spans 44–160 (DARAMAATPA…KPKTIQVQVA (117 aa)).

Belongs to the small heat shock protein (HSP20) family.

The protein localises to the cytoplasm. This chain is 17.9 kDa class II heat shock protein (HSP17.9), found in Helianthus annuus (Common sunflower).